The sequence spans 569 residues: Anti-Muellerian hormone type-2 receptor (569 aa).

Residues 1–17 form the signal peptide; the sequence is MLGTLGLWALLPAAVQA. Topologically, residues 18–148 are extracellular; that stretch reads PPNRRTCVFF…AAPGESPWMA (131 aa). 2 disulfide bridges follow: C55–C79 and C92–C109. N-linked (GlcNAc...) asparagine glycosylation occurs at N66. The N-linked (GlcNAc...) asparagine glycan is linked to N119. The chain crosses the membrane as a helical span at residues 149–169; it reads LALLGLVLLLLLLLGGIVVAL. Over 170-569 the chain is Cytoplasmic; it reads LQRKAYRVQS…PGAACASSDV (400 aa). One can recognise a Protein kinase domain in the interval 201–511; it reads LCFSQVIREG…RLVALVHPQE (311 aa). Residues 207–215 and K228 each bind ATP; that span reads IREGGHAAV. The active-site Proton acceptor is the D331. The interval 512-535 is disordered; that stretch reads AQPCPEGRPHSHPEDWPPAPAPAP.

This sequence belongs to the protein kinase superfamily. TKL Ser/Thr protein kinase family. TGFB receptor subfamily. Interacts with type I receptor ACVR1. Requires Mg(2+) as cofactor. Mn(2+) is required as a cofactor.

The protein resides in the membrane. It catalyses the reaction L-threonyl-[receptor-protein] + ATP = O-phospho-L-threonyl-[receptor-protein] + ADP + H(+). The enzyme catalyses L-seryl-[receptor-protein] + ATP = O-phospho-L-seryl-[receptor-protein] + ADP + H(+). In terms of biological role, on ligand binding, forms a receptor complex consisting of two type II and two type I transmembrane serine/threonine kinases. Type II receptors phosphorylate and activate type I receptors which autophosphorylate, then bind and activate SMAD transcriptional regulators. Receptor for anti-Muellerian hormone. This chain is Anti-Muellerian hormone type-2 receptor (AMHR2), found in Oryctolagus cuniculus (Rabbit).